We begin with the raw amino-acid sequence, 160 residues long: Cyclic pyranopterin monophosphate synthase (160 aa).

Substrate-binding positions include 75 to 77 (LCH) and 113 to 114 (ME). Residue D128 is part of the active site.

Belongs to the MoaC family. As to quaternary structure, homohexamer; trimer of dimers.

The enzyme catalyses (8S)-3',8-cyclo-7,8-dihydroguanosine 5'-triphosphate = cyclic pyranopterin phosphate + diphosphate. Its pathway is cofactor biosynthesis; molybdopterin biosynthesis. Functionally, catalyzes the conversion of (8S)-3',8-cyclo-7,8-dihydroguanosine 5'-triphosphate to cyclic pyranopterin monophosphate (cPMP). This is Cyclic pyranopterin monophosphate synthase from Sodalis glossinidius (strain morsitans).